The chain runs to 366 residues: MTAMMKAAVFVEPGRIELADKPIPDIGPNDALVRITTTTICGTDVHILKGEYPVAKGLTVGHEPVGIIEKLGSAVTGYREGQRVIAGAICPNFNSYAAQDGVASQDGSYLMASGQCGCHGYKATAGWRFGNMIDGTQAEYVLVPDAQANLTPIPDGLTDEQVLMCPDIMSTGFKGAENANIRIGDTVAVFAQGPIGLCATAGARLCGATTIIAIDGNDHRLEIARKMGADVVLNFRNCDVVDEVMKLTGGRGVDASIEALGTQATFEQSLRVLKPGGTLSSLGVYSSDLTIPLSAFAAGLGDHKINTALCPGGKERMRRLINVIESGRVDLGALVTHQYRLDDIVAAYDLFANQRDGVLKIAIKPH.

C41, H62, E63, and D167 together coordinate Zn(2+).

This sequence belongs to the zinc-containing alcohol dehydrogenase family. Homotetramer. The cofactor is Zn(2+).

It carries out the reaction a primary alcohol + NAD(+) = an aldehyde + NADH + H(+). The enzyme catalyses a secondary alcohol + NAD(+) = a ketone + NADH + H(+). The catalysed reaction is (R,R)-butane-2,3-diol + NAD(+) = (R)-acetoin + NADH + H(+). It catalyses the reaction an aldehyde + NAD(+) + H2O = a carboxylate + NADH + 2 H(+). In terms of biological role, multifunctional alcohol dehydrogenase exhibiting NAD(+)-dependent dehydrogenase activities for 2,3-butanediol, ethanol and acetaldehyde, and reductase activities for acetoin (NADH-dependent), and diacetyl and acetaldehyde (independently of whether NADH or NADPH is the reductant). The rate of oxidation of 2,3-butanediol is much higher than for the oxidation of ethanol. Has acetaldehyde dehydrogenase activity leading to acetate formation. May function in the release of excess reducing power in the absence of exogenous hydrogen acceptors such as oxygen. This is Alcohol dehydrogenase (adh) from Cupriavidus necator (strain ATCC 17699 / DSM 428 / KCTC 22496 / NCIMB 10442 / H16 / Stanier 337) (Ralstonia eutropha).